Consider the following 137-residue polypeptide: Large-conductance mechanosensitive channel (137 aa).

2 consecutive transmembrane segments (helical) span residues 16–36 and 83–103; these read VIDLAVGVIIGGAFGKIVDSI and GNFITVALNFAILAFIIFLMI.

The protein belongs to the MscL family. In terms of assembly, homopentamer.

Its subcellular location is the cell inner membrane. Its function is as follows. Channel that opens in response to stretch forces in the membrane lipid bilayer. May participate in the regulation of osmotic pressure changes within the cell. This is Large-conductance mechanosensitive channel from Methylibium petroleiphilum (strain ATCC BAA-1232 / LMG 22953 / PM1).